We begin with the raw amino-acid sequence, 402 residues long: Lipid-A-disaccharide synthase (402 aa).

This sequence belongs to the LpxB family.

The catalysed reaction is a lipid X + a UDP-2-N,3-O-bis[(3R)-3-hydroxyacyl]-alpha-D-glucosamine = a lipid A disaccharide + UDP + H(+). It participates in bacterial outer membrane biogenesis; LPS lipid A biosynthesis. Functionally, condensation of UDP-2,3-diacylglucosamine and 2,3-diacylglucosamine-1-phosphate to form lipid A disaccharide, a precursor of lipid A, a phosphorylated glycolipid that anchors the lipopolysaccharide to the outer membrane of the cell. This is Lipid-A-disaccharide synthase from Cupriavidus pinatubonensis (strain JMP 134 / LMG 1197) (Cupriavidus necator (strain JMP 134)).